The following is a 434-amino-acid chain: Chaperone SurA (434 aa).

The signal sequence occupies residues 1–20 (MKNWRTLILGLVICANTAFA). PpiC domains lie at 171 to 272 (DTEL…KVND) and 282 to 382 (VTEV…QLVD).

Its subcellular location is the periplasm. It catalyses the reaction [protein]-peptidylproline (omega=180) = [protein]-peptidylproline (omega=0). In terms of biological role, chaperone involved in the correct folding and assembly of outer membrane proteins. Recognizes specific patterns of aromatic residues and the orientation of their side chains, which are found more frequently in integral outer membrane proteins. May act in both early periplasmic and late outer membrane-associated steps of protein maturation. This chain is Chaperone SurA, found in Yersinia pestis bv. Antiqua (strain Antiqua).